Here is a 156-residue protein sequence, read N- to C-terminus: ATP synthase subunit b (156 aa).

A helical membrane pass occupies residues 11–31 (AIAFVLFVLFCMKYVWPPLMA).

The protein belongs to the ATPase B chain family. F-type ATPases have 2 components, F(1) - the catalytic core - and F(0) - the membrane proton channel. F(1) has five subunits: alpha(3), beta(3), gamma(1), delta(1), epsilon(1). F(0) has three main subunits: a(1), b(2) and c(10-14). The alpha and beta chains form an alternating ring which encloses part of the gamma chain. F(1) is attached to F(0) by a central stalk formed by the gamma and epsilon chains, while a peripheral stalk is formed by the delta and b chains.

The protein localises to the cell inner membrane. Functionally, f(1)F(0) ATP synthase produces ATP from ADP in the presence of a proton or sodium gradient. F-type ATPases consist of two structural domains, F(1) containing the extramembraneous catalytic core and F(0) containing the membrane proton channel, linked together by a central stalk and a peripheral stalk. During catalysis, ATP synthesis in the catalytic domain of F(1) is coupled via a rotary mechanism of the central stalk subunits to proton translocation. Component of the F(0) channel, it forms part of the peripheral stalk, linking F(1) to F(0). This is ATP synthase subunit b from Shigella boydii serotype 18 (strain CDC 3083-94 / BS512).